The chain runs to 396 residues: 8-amino-7-oxononanoate synthase (396 aa).

Arginine 19 serves as a coordination point for substrate. 106–107 is a pyridoxal 5'-phosphate binding site; the sequence is GY. A substrate-binding site is contributed by histidine 131. The pyridoxal 5'-phosphate site is built by serine 176, histidine 204, and threonine 233. At lysine 236 the chain carries N6-(pyridoxal phosphate)lysine. Residue threonine 350 participates in substrate binding.

Belongs to the class-II pyridoxal-phosphate-dependent aminotransferase family. BioF subfamily. In terms of assembly, homodimer. The cofactor is pyridoxal 5'-phosphate.

The enzyme catalyses 6-carboxyhexanoyl-[ACP] + L-alanine + H(+) = (8S)-8-amino-7-oxononanoate + holo-[ACP] + CO2. The protein operates within cofactor biosynthesis; biotin biosynthesis. Functionally, catalyzes the decarboxylative condensation of pimeloyl-[acyl-carrier protein] and L-alanine to produce 8-amino-7-oxononanoate (AON), [acyl-carrier protein], and carbon dioxide. The sequence is that of 8-amino-7-oxononanoate synthase from Pseudomonas savastanoi pv. phaseolicola (strain 1448A / Race 6) (Pseudomonas syringae pv. phaseolicola (strain 1448A / Race 6)).